Here is a 120-residue protein sequence, read N- to C-terminus: Large ribosomal subunit protein uL18 (120 aa).

This sequence belongs to the universal ribosomal protein uL18 family. As to quaternary structure, part of the 50S ribosomal subunit. Part of the 5S rRNA/L5/L18/L25 subcomplex. Contacts the 23S rRNA and 5S rRNA. Required for catalysis of RNase M5.

In terms of biological role, this is one of the proteins that bind and probably mediate the attachment of the 5S RNA into the large ribosomal subunit, where it forms part of the central protuberance. Functionally, required for correct processing of both the 5' and 3' ends of 5S rRNA precursor, which is does in conjunction with ribonuclease M5 (RNase M5, rnmV). Possibly folds the 5S rRNA precursor into the correct conformation, thus acting as a chaperone. This Bacillus subtilis (strain 168) protein is Large ribosomal subunit protein uL18.